Reading from the N-terminus, the 556-residue chain is 2-succinyl-5-enolpyruvyl-6-hydroxy-3-cyclohexene-1-carboxylate synthase (556 aa).

The protein belongs to the TPP enzyme family. MenD subfamily. As to quaternary structure, homodimer. Requires Mg(2+) as cofactor. Mn(2+) serves as cofactor. It depends on thiamine diphosphate as a cofactor.

It carries out the reaction isochorismate + 2-oxoglutarate + H(+) = 5-enolpyruvoyl-6-hydroxy-2-succinyl-cyclohex-3-ene-1-carboxylate + CO2. The protein operates within quinol/quinone metabolism; 1,4-dihydroxy-2-naphthoate biosynthesis; 1,4-dihydroxy-2-naphthoate from chorismate: step 2/7. It participates in quinol/quinone metabolism; menaquinone biosynthesis. Functionally, catalyzes the thiamine diphosphate-dependent decarboxylation of 2-oxoglutarate and the subsequent addition of the resulting succinic semialdehyde-thiamine pyrophosphate anion to isochorismate to yield 2-succinyl-5-enolpyruvyl-6-hydroxy-3-cyclohexene-1-carboxylate (SEPHCHC). The sequence is that of 2-succinyl-5-enolpyruvyl-6-hydroxy-3-cyclohexene-1-carboxylate synthase from Citrobacter koseri (strain ATCC BAA-895 / CDC 4225-83 / SGSC4696).